The primary structure comprises 402 residues: uncharacterized protein (402 aa).

12 helical membrane passes run 23–43 (IVSVVMFTFIGYLTIGIPLAV), 52–72 (LGYGSVLAGLVISLQYLATLL), 90–110 (VLYGMAGSAASGLFMLLSVAI), 121–141 (LLVGRLVLGAAESLVGSAAIG), 158–178 (WNGIASYGAIALGAPLGVLLV), 180–200 (WLGLWSMGASIVLLGALGFAL), 228–248 (GMGLALGAIGFGTIATFITLY), 255–275 (ANAVLCLSAFGGCFIGARLLF), 282–302 (LGGFRVAIICLGVESLGLLLL), 309–329 (WVGLAGAALTGFGFSLVFPAF), 351–371 (LFVDLSLGITGPLVGFVANLF), and 375–395 (SMFLFACLASLSGLALAIALH).

The protein belongs to the major facilitator superfamily. YhhS family.

Its subcellular location is the cell inner membrane. This is an uncharacterized protein from Pseudomonas aeruginosa (strain UCBPP-PA14).